We begin with the raw amino-acid sequence, 440 residues long: Thymidine phosphorylase (440 aa).

Belongs to the thymidine/pyrimidine-nucleoside phosphorylase family. Homodimer.

It carries out the reaction thymidine + phosphate = 2-deoxy-alpha-D-ribose 1-phosphate + thymine. It participates in pyrimidine metabolism; dTMP biosynthesis via salvage pathway; dTMP from thymine: step 1/2. In terms of biological role, the enzymes which catalyze the reversible phosphorolysis of pyrimidine nucleosides are involved in the degradation of these compounds and in their utilization as carbon and energy sources, or in the rescue of pyrimidine bases for nucleotide synthesis. The sequence is that of Thymidine phosphorylase from Shigella dysenteriae serotype 1 (strain Sd197).